Consider the following 224-residue polypeptide: Cytidylate kinase (224 aa).

11 to 19 (GPAAAGKST) is an ATP binding site.

The protein belongs to the cytidylate kinase family. Type 1 subfamily.

The protein resides in the cytoplasm. The enzyme catalyses CMP + ATP = CDP + ADP. The catalysed reaction is dCMP + ATP = dCDP + ADP. This Bacillus velezensis (strain DSM 23117 / BGSC 10A6 / LMG 26770 / FZB42) (Bacillus amyloliquefaciens subsp. plantarum) protein is Cytidylate kinase.